Here is a 156-residue protein sequence, read N- to C-terminus: Large ribosomal subunit protein eL24 (156 aa).

The segment at L87–R156 is disordered. Positions L89 to K129 are enriched in basic and acidic residues. Residues S130–A147 show a composition bias toward low complexity.

Belongs to the eukaryotic ribosomal protein eL24 family.

The polypeptide is Large ribosomal subunit protein eL24 (RPL24) (Debaryomyces hansenii (strain ATCC 36239 / CBS 767 / BCRC 21394 / JCM 1990 / NBRC 0083 / IGC 2968) (Yeast)).